The following is a 275-amino-acid chain: Undecaprenyl-diphosphatase (275 aa).

Helical transmembrane passes span 4–24 (IYGL…EFLP), 54–74 (LGSI…LFGL), 92–112 (LHLY…LMFY), 123–143 (YVMY…LIHD), 154–174 (ISYL…LPGF), 194–214 (AFEF…ILDL), 228–248 (MFII…KLFW), and 255–275 (SFIP…LILI).

This sequence belongs to the UppP family.

The protein localises to the cell membrane. The catalysed reaction is di-trans,octa-cis-undecaprenyl diphosphate + H2O = di-trans,octa-cis-undecaprenyl phosphate + phosphate + H(+). Its function is as follows. Catalyzes the dephosphorylation of undecaprenyl diphosphate (UPP). Confers resistance to bacitracin. The polypeptide is Undecaprenyl-diphosphatase (Baumannia cicadellinicola subsp. Homalodisca coagulata).